Consider the following 78-residue polypeptide: MTKFSLLDHEAVPKHEIMSEGELKSVLSKYFIEKEQLPKIKVQDPVCKEIGAVVGDVVKITRKSQTAGEADYYRLVIE.

It belongs to the archaeal Rpo5/eukaryotic RPB5 RNA polymerase subunit family. Part of the RNA polymerase complex.

It localises to the cytoplasm. The catalysed reaction is RNA(n) + a ribonucleoside 5'-triphosphate = RNA(n+1) + diphosphate. Functionally, DNA-dependent RNA polymerase (RNAP) catalyzes the transcription of DNA into RNA using the four ribonucleoside triphosphates as substrates. The protein is DNA-directed RNA polymerase subunit Rpo5 of Methanosarcina mazei (strain ATCC BAA-159 / DSM 3647 / Goe1 / Go1 / JCM 11833 / OCM 88) (Methanosarcina frisia).